Consider the following 230-residue polypeptide: Ribose-5-phosphate isomerase A (230 aa).

Residues 28–31 (TGST), 83–86 (DGAD), and 97–100 (KGLG) each bind substrate. The active-site Proton acceptor is E106. K124 is a binding site for substrate.

It belongs to the ribose 5-phosphate isomerase family. In terms of assembly, homodimer.

It catalyses the reaction aldehydo-D-ribose 5-phosphate = D-ribulose 5-phosphate. It functions in the pathway carbohydrate degradation; pentose phosphate pathway; D-ribose 5-phosphate from D-ribulose 5-phosphate (non-oxidative stage): step 1/1. Its function is as follows. Catalyzes the reversible conversion of ribose-5-phosphate to ribulose 5-phosphate. The chain is Ribose-5-phosphate isomerase A from Gloeobacter violaceus (strain ATCC 29082 / PCC 7421).